The primary structure comprises 264 residues: Undecaprenyl-diphosphatase (264 aa).

8 consecutive transmembrane segments (helical) span residues Val-7–His-27, Leu-39–Tyr-59, Ile-89–Phe-109, Leu-112–Leu-132, Ile-145–Ser-165, Ser-182–Leu-202, Met-212–Phe-232, and Ser-244–Phe-264.

The protein belongs to the UppP family.

The protein resides in the cell inner membrane. The enzyme catalyses di-trans,octa-cis-undecaprenyl diphosphate + H2O = di-trans,octa-cis-undecaprenyl phosphate + phosphate + H(+). Catalyzes the dephosphorylation of undecaprenyl diphosphate (UPP). Confers resistance to bacitracin. In Borrelia hermsii (strain HS1 / DAH), this protein is Undecaprenyl-diphosphatase.